Reading from the N-terminus, the 63-residue chain is Large ribosomal subunit protein uL29 (63 aa).

The protein belongs to the universal ribosomal protein uL29 family.

The protein is Large ribosomal subunit protein uL29 of Salmonella agona (strain SL483).